The following is a 320-amino-acid chain: GTP 3',8-cyclase (320 aa).

The Radical SAM core domain occupies 5–225 (QFGRKINYLR…IQLIKKDEKA (221 aa)). Residue Arg-14 participates in GTP binding. 2 residues coordinate [4Fe-4S] cluster: Cys-21 and Cys-25. Tyr-27 serves as a coordination point for S-adenosyl-L-methionine. Cys-28 provides a ligand contact to [4Fe-4S] cluster. Position 64 (Arg-64) interacts with GTP. Gly-68 lines the S-adenosyl-L-methionine pocket. Thr-95 contributes to the GTP binding site. Ser-119 provides a ligand contact to S-adenosyl-L-methionine. Lys-155 is a GTP binding site. Residue Met-189 coordinates S-adenosyl-L-methionine. Cys-248 and Cys-251 together coordinate [4Fe-4S] cluster. 253-255 (RIR) is a GTP binding site. Cys-265 contacts [4Fe-4S] cluster.

Belongs to the radical SAM superfamily. MoaA family. As to quaternary structure, monomer and homodimer. It depends on [4Fe-4S] cluster as a cofactor.

It catalyses the reaction GTP + AH2 + S-adenosyl-L-methionine = (8S)-3',8-cyclo-7,8-dihydroguanosine 5'-triphosphate + 5'-deoxyadenosine + L-methionine + A + H(+). It participates in cofactor biosynthesis; molybdopterin biosynthesis. Its function is as follows. Catalyzes the cyclization of GTP to (8S)-3',8-cyclo-7,8-dihydroguanosine 5'-triphosphate. The sequence is that of GTP 3',8-cyclase from Campylobacter jejuni (strain RM1221).